The primary structure comprises 728 residues: MDKETIKAHKISDEEYAQILEILGREPNLLELGVISAMWSEHCSYKSSKKYLNGFPTKAPWVIQGPGENAGVIDIGQGMAAVFKVESHNHPSFIEPFAGAATGVGGILRDVFTMGARVVAGLNSLKFGDIHDEKCGKHQKYLVKGVVNGISHYGNCMGVPTIGGECAFDECFNGNILVNAFALGVCKSEDIFYAKAEGVGNPVIYVGSKTGRDGLGGAVMASDSFNEESKSLRPTVQIGDPFSEKLLMEACLELFKTDYIVGIQDMGAAGLTSSSFEMAGRSGSGMKLYLDKTPMRESGMTPYELMLSESQERMLICAKKGYEDKVIEIFKKWDLDAVVMGEVTNTGKMELFWHDELVGLIPIEPLSEKAPILSRPTSEPKYLSEIKNYKFELKSSVQELFIQMLQNENINNKAFIYDQFDSSVQTNTIKADGRLGASVIRIKENGASVAMAIECNSRLNYVNSKIGAALAVASAGRKVACTGAKPLAISDCLNYGNPQNPEVMWQFAQGCEGIKEACKELNTPVVSGNVSLYNETEGVSIYPSPTIVSVGVLEDANKTLKASFEKENLSVYLLGESLGEFSGSMVMKIQDKKVSGSLKELDYKAELALWDLLYKANQNSLLECANSVGIGGIAMTLAKMFAISSVGANLTSDFDDEKMIFDESASRAIIGLSKENEEAFLNLAKEFGVKAYKLGVSTSQKHFKLDSIELSKAELDKLYFESFKEQIQ.

His42 is an active-site residue. Tyr45 and Lys84 together coordinate ATP. A Mg(2+)-binding site is contributed by Glu86. Substrate-binding positions include 87-90 and Arg109; that span reads SHNH. The active-site Proton acceptor is His88. Asp110 is a Mg(2+) binding site. Gln237 lines the substrate pocket. Asp265 is a binding site for Mg(2+). 309-311 lines the substrate pocket; that stretch reads ESQ. ATP is bound by residues Asp491 and Gly528. Residue Asn529 coordinates Mg(2+). Ser531 serves as a coordination point for substrate.

The protein belongs to the FGAMS family. Monomer. Part of the FGAM synthase complex composed of 1 PurL, 1 PurQ and 2 PurS subunits.

The protein resides in the cytoplasm. It catalyses the reaction N(2)-formyl-N(1)-(5-phospho-beta-D-ribosyl)glycinamide + L-glutamine + ATP + H2O = 2-formamido-N(1)-(5-O-phospho-beta-D-ribosyl)acetamidine + L-glutamate + ADP + phosphate + H(+). It participates in purine metabolism; IMP biosynthesis via de novo pathway; 5-amino-1-(5-phospho-D-ribosyl)imidazole from N(2)-formyl-N(1)-(5-phospho-D-ribosyl)glycinamide: step 1/2. Part of the phosphoribosylformylglycinamidine synthase complex involved in the purines biosynthetic pathway. Catalyzes the ATP-dependent conversion of formylglycinamide ribonucleotide (FGAR) and glutamine to yield formylglycinamidine ribonucleotide (FGAM) and glutamate. The FGAM synthase complex is composed of three subunits. PurQ produces an ammonia molecule by converting glutamine to glutamate. PurL transfers the ammonia molecule to FGAR to form FGAM in an ATP-dependent manner. PurS interacts with PurQ and PurL and is thought to assist in the transfer of the ammonia molecule from PurQ to PurL. This chain is Phosphoribosylformylglycinamidine synthase subunit PurL, found in Campylobacter jejuni subsp. jejuni serotype O:2 (strain ATCC 700819 / NCTC 11168).